The primary structure comprises 278 residues: Pantothenate synthetase (278 aa).

An ATP-binding site is contributed by 28–35 (MGNLHAGH). Histidine 35 serves as the catalytic Proton donor. Residue glutamine 59 coordinates (R)-pantoate. Residue glutamine 59 participates in beta-alanine binding. 145–148 (GKKD) contributes to the ATP binding site. Glutamine 151 is a binding site for (R)-pantoate. 182-185 (LSSR) contacts ATP.

It belongs to the pantothenate synthetase family. In terms of assembly, homodimer.

It is found in the cytoplasm. It catalyses the reaction (R)-pantoate + beta-alanine + ATP = (R)-pantothenate + AMP + diphosphate + H(+). It participates in cofactor biosynthesis; (R)-pantothenate biosynthesis; (R)-pantothenate from (R)-pantoate and beta-alanine: step 1/1. Functionally, catalyzes the condensation of pantoate with beta-alanine in an ATP-dependent reaction via a pantoyl-adenylate intermediate. In Methylobacillus flagellatus (strain ATCC 51484 / DSM 6875 / VKM B-1610 / KT), this protein is Pantothenate synthetase.